The primary structure comprises 234 residues: DNA repair protein RecO (234 aa).

Belongs to the RecO family.

Involved in DNA repair and RecF pathway recombination. The polypeptide is DNA repair protein RecO (Hamiltonella defensa subsp. Acyrthosiphon pisum (strain 5AT)).